The primary structure comprises 775 residues: MDHHAQHHPRSHACVLPNGLRLHLAHDPAASRAAAWLRVAAGSHDEPSAHPGLAHFLEHLSFLGGAAFPGDERLMPWLQVRGGQVNASTLGKTTDYFFEVTAEHLGAGLARLIDMLARPLLDIDAQRREREVLEAEYLARSADEQTLIDAALALGLPAGHPLRRFAAGRRDSLALESDAFQRALREFHAAHYHAGNCQLWLQGPQTLDELERLAQRACADLPGRAPGASPPPPPLLPFACEALALRLPGPPRLVLGFALDALRGADEQTLLAFAELLGDRSPGGLLAALGEQGLGESVALRVVHRDARQALLALTFELFDGSAAAALEAAFFDWLGALRDDAASLLAARRPLLAEPTAPLERLRQRVLGLPAEIRPACLDALRADRCLRLHLDSELDGAEARWSAGFRLSVAPVAAAPPLAAQRHAWRFELPLPPSAAAEGALFLRWRFPGVPARSRFLALRQALRPLCGQARLGGVEMGLEALGEDWSLSLLGPRDRLEAAVRPALARLLAAPPDWRANGERLSSAERRRSATGLPIRQLLDALPGLLGEPLAEVDDWRRTRWDALVMQAAMPDPRWMPGQAAGERLEPLPPRPGRHRRELAVDGESALLLFCPLPTQEVPMEAAWRLLARLHEPAFQRRLRDELQLGYALFCGFREVGARRGLLFAAQSPRACPARLLEHMETFLQRSAEALAQLPARRLAGLRKALADDLRRAPGSFAERARRAWAEHLGGGAGRSRLLAEAALGLSGDDLLAAQARLLEARGGWWVLSSRR.

A Zn(2+)-binding site is contributed by His-55. The active-site Proton acceptor is Glu-58. The Zn(2+) site is built by His-59 and Glu-136.

It belongs to the peptidase M16 family. The cofactor is Zn(2+).

Its pathway is cofactor biosynthesis; pyrroloquinoline quinone biosynthesis. In terms of biological role, required for coenzyme pyrroloquinoline quinone (PQQ) biosynthesis. It is thought that this protein is a protease that cleaves peptides bond in a small peptide (gene pqqA), providing the glutamate and tyrosine residues which are necessary for the synthesis of PQQ. This Pseudomonas aeruginosa (strain ATCC 15692 / DSM 22644 / CIP 104116 / JCM 14847 / LMG 12228 / 1C / PRS 101 / PAO1) protein is Coenzyme PQQ synthesis protein F (pqqF).